A 615-amino-acid chain; its full sequence is Putative DNA ligase 205R (615 aa).

The active-site N6-AMP-lysine intermediate is Lys101.

This sequence belongs to the NAD-dependent DNA ligase family.

It catalyses the reaction NAD(+) + (deoxyribonucleotide)n-3'-hydroxyl + 5'-phospho-(deoxyribonucleotide)m = (deoxyribonucleotide)n+m + AMP + beta-nicotinamide D-nucleotide.. Catalyzes the formation of phosphodiester linkages between 5'-phosphoryl and 3'-hydroxyl groups in double-stranded DNA using NAD as a coenzyme and as the energy source for the reaction. In Invertebrate iridescent virus 6 (IIV-6), this protein is Putative DNA ligase 205R.